The chain runs to 60 residues: Cytotoxin 5 (60 aa).

Cystine bridges form between Cys-3–Cys-21, Cys-14–Cys-38, Cys-42–Cys-53, and Cys-54–Cys-59.

It belongs to the three-finger toxin family. Short-chain subfamily. Type IA cytotoxin sub-subfamily. Monomer in solution; Homodimer and oligomer in the presence of negatively charged lipids forming a pore with a size ranging between 20 and 30 Angstroms. In terms of tissue distribution, expressed by the venom gland.

It is found in the secreted. It localises to the target cell membrane. Its function is as follows. Basic protein that binds to cell membrane and depolarizes cardiomyocytes. It also possesses lytic activity on many other cells, including red blood cells. Interaction with sulfatides in the cell membrane induces pore formation and cell internalization and is responsible for cytotoxicity in cardiomyocytes. It targets the mitochondrial membrane and induces mitochondrial swelling and fragmentation. Inhibits protein kinases C. It binds to the integrin alpha-V/beta-3 with a moderate affinity. Is cardiotoxic and cytocidal to Yoshida sarcoma cells. This chain is Cytotoxin 5, found in Naja atra (Chinese cobra).